The sequence spans 60 residues: MATKTVKVTQTKSAIGRLPKHRATLTGLGLRRIGHTVELEDTPSIRGMINKVYYMVKVED.

The protein belongs to the universal ribosomal protein uL30 family. Part of the 50S ribosomal subunit.

This is Large ribosomal subunit protein uL30 from Shewanella sp. (strain MR-7).